A 285-amino-acid chain; its full sequence is 1-deoxypentalenic acid 11-beta-hydroxylase (285 aa).

A substrate-binding site is contributed by Arg-117. His-137 and Asp-139 together coordinate Fe cation. 2-oxoglutarate contacts are provided by residues 137-139 and Trp-153; that span reads HQD. Arg-188 is a binding site for substrate. His-226 contributes to the Fe cation binding site. 2-oxoglutarate-binding residues include Ser-228 and Arg-240.

This sequence belongs to the PhyH family. Fe cation serves as cofactor. Requires L-ascorbate as cofactor.

It carries out the reaction 1-deoxypentalenate + 2-oxoglutarate + O2 = 1-deoxy-11beta-hydroxypentalenate + succinate + CO2. Its pathway is antibiotic biosynthesis; neopentalenolactone biosynthesis. Catalyzes the conversion of 1-deoxypentalenic acid to 11-beta-hydroxy-1-deoxypentalenic acid in the biosynthesis of neopentalenolactone antibiotic. The chain is 1-deoxypentalenic acid 11-beta-hydroxylase (ptlH) from Streptomyces avermitilis (strain ATCC 31267 / DSM 46492 / JCM 5070 / NBRC 14893 / NCIMB 12804 / NRRL 8165 / MA-4680).